A 333-amino-acid chain; its full sequence is Phosphate acyltransferase (333 aa).

Belongs to the PlsX family. As to quaternary structure, homodimer. Probably interacts with PlsY.

The protein localises to the cytoplasm. The enzyme catalyses a fatty acyl-[ACP] + phosphate = an acyl phosphate + holo-[ACP]. It participates in lipid metabolism; phospholipid metabolism. Its function is as follows. Catalyzes the reversible formation of acyl-phosphate (acyl-PO(4)) from acyl-[acyl-carrier-protein] (acyl-ACP). This enzyme utilizes acyl-ACP as fatty acyl donor, but not acyl-CoA. This Lactobacillus gasseri (strain ATCC 33323 / DSM 20243 / BCRC 14619 / CIP 102991 / JCM 1131 / KCTC 3163 / NCIMB 11718 / NCTC 13722 / AM63) protein is Phosphate acyltransferase.